The primary structure comprises 215 residues: ATP-dependent Clp protease proteolytic subunit (215 aa).

Serine 115 functions as the Nucleophile in the catalytic mechanism. Histidine 140 is a catalytic residue.

Belongs to the peptidase S14 family. In terms of assembly, fourteen ClpP subunits assemble into 2 heptameric rings which stack back to back to give a disk-like structure with a central cavity, resembling the structure of eukaryotic proteasomes.

It localises to the cytoplasm. It catalyses the reaction Hydrolysis of proteins to small peptides in the presence of ATP and magnesium. alpha-casein is the usual test substrate. In the absence of ATP, only oligopeptides shorter than five residues are hydrolyzed (such as succinyl-Leu-Tyr-|-NHMec, and Leu-Tyr-Leu-|-Tyr-Trp, in which cleavage of the -Tyr-|-Leu- and -Tyr-|-Trp bonds also occurs).. In terms of biological role, cleaves peptides in various proteins in a process that requires ATP hydrolysis. Has a chymotrypsin-like activity. Plays a major role in the degradation of misfolded proteins. This chain is ATP-dependent Clp protease proteolytic subunit, found in Anaplasma marginale (strain Florida).